The following is a 402-amino-acid chain: Protein prenyltransferase alpha subunit repeat-containing protein 1 (402 aa).

Position 2 is an N-acetylalanine (A2). PFTA repeat units follow at residues 87–120, 122–155, 180–213, and 219–252; these read LIDV…LNPI, DLHL…QETS, EMEV…KLDV, and ELSS…SQTV. A disordered region spans residues 263–282; the sequence is LRSEPALVPPKDEEAAVSTE. The stretch at 295–328 is one PFTA 5 repeat; the sequence is EVEFSTDLIDSYPGHETLWCHRRHIFYLQHHLNA.

Belongs to the protein prenyltransferase subunit alpha family.

In Homo sapiens (Human), this protein is Protein prenyltransferase alpha subunit repeat-containing protein 1 (PTAR1).